Consider the following 114-residue polypeptide: T cell receptor beta variable 19 (114 aa).

The first 21 residues, 1-21 (MSNQVLCCVVLCLLGANTVDG), serve as a signal peptide directing secretion. An Ig-like domain is found at 22–114 (GITQSPKYLF…TAFYLCASSI (93 aa)). Residue Asn-37 is glycosylated (N-linked (GlcNAc...) asparagine). A disulfide bridge links Cys-42 with Cys-110.

In terms of assembly, alpha-beta TR is a heterodimer composed of an alpha and beta chain; disulfide-linked. The alpha-beta TR is associated with the transmembrane signaling CD3 coreceptor proteins to form the TR-CD3 (TcR or TCR). The assembly of alpha-beta TR heterodimers with CD3 occurs in the endoplasmic reticulum where a single alpha-beta TR heterodimer associates with one CD3D-CD3E heterodimer, one CD3G-CD3E heterodimer and one CD247 homodimer forming a stable octameric structure. CD3D-CD3E and CD3G-CD3E heterodimers preferentially associate with TR alpha and TR beta chains, respectively. The association of the CD247 homodimer is the last step of TcR assembly in the endoplasmic reticulum and is required for transport to the cell surface. (Microbial infection) Interacts with Staphylococcus aureus enterotoxin type B/SEB.

The protein resides in the cell membrane. V region of the variable domain of T cell receptor (TR) beta chain that participates in the antigen recognition. Alpha-beta T cell receptors are antigen specific receptors which are essential to the immune response and are present on the cell surface of T lymphocytes. Recognize peptide-major histocompatibility (MH) (pMH) complexes that are displayed by antigen presenting cells (APC), a prerequisite for efficient T cell adaptive immunity against pathogens. Binding of alpha-beta TR to pMH complex initiates TR-CD3 clustering on the cell surface and intracellular activation of LCK that phosphorylates the ITAM motifs of CD3G, CD3D, CD3E and CD247 enabling the recruitment of ZAP70. In turn ZAP70 phosphorylates LAT, which recruits numerous signaling molecules to form the LAT signalosome. The LAT signalosome propagates signal branching to three major signaling pathways, the calcium, the mitogen-activated protein kinase (MAPK) kinase and the nuclear factor NF-kappa-B (NF-kB) pathways, leading to the mobilization of transcription factors that are critical for gene expression and essential for T cell growth and differentiation. The T cell repertoire is generated in the thymus, by V-(D)-J rearrangement. This repertoire is then shaped by intrathymic selection events to generate a peripheral T cell pool of self-MH restricted, non-autoaggressive T cells. Post-thymic interaction of alpha-beta TR with the pMH complexes shapes TR structural and functional avidity. In Homo sapiens (Human), this protein is T cell receptor beta variable 19.